Consider the following 520-residue polypeptide: Beta-2-syntrophin (520 aa).

The interval 45–95 is disordered; sequence EPPAAAFNGLPNGGGGESLPGSPNRGLGPPSPPAPPRGPAGEASASPPVRR. Residues 63-72 are compositionally biased toward low complexity; sequence LPGSPNRGLG. Positions 73-82 are enriched in pro residues; the sequence is PPSPPAPPRG. A phosphoserine mark is found at Ser-75, Ser-90, Ser-109, Ser-191, Ser-202, Ser-213, Ser-373, and Ser-375. Residues 83-93 are compositionally biased toward low complexity; that stretch reads PAGEASASPPV. A PDZ domain is found at 95-178; it reads RVRVVKQEAG…EVLLEVKFIR (84 aa). PH domains are found at residues 143 to 280 and 305 to 417; these read ILSV…TNIM and EVKH…QGCH. A disordered region spans residues 195 to 220; the sequence is WEGASPQSPSFSGSEDSGSPKHQNTT. Over residues 197-211 the composition is skewed to low complexity; that stretch reads GASPQSPSFSGSEDS. The SU domain occupies 464-520; it reads PFERLKMSADDGIRNLYLDFGGPEGELTMDLHSCPKPIVFVLHTFLSAKVTRMGLLV. The segment at 498 to 520 is calmodulin-binding; the sequence is PKPIVFVLHTFLSAKVTRMGLLV.

It belongs to the syntrophin family. Monomer and homodimer. Interacts with the dystrophin protein DMD and related protein DTNA; and with the other members of the syntrophin family: SNTA1 and SNTB1. Interacts with the neuroregulin receptor ERBB4. Interacts with PTPRN when phosphorylated, protecting PTPRN from protein cleavage by CAPN1. Dephosphorylation upon insulin stimulation disrupts the interaction with PTPRN and results in the cleavage of PTPRN. Interacts with the sodium channel proteins SCN4A and SCN5A. Interacts with SAST, MAST205, microtubules and microtubule-associated proteins. Interacts with the dystrophin related protein UTRN. Interacts with DTNB. In terms of processing, phosphorylated. Partially dephosphorylated upon insulin stimulation. Ubiquitous. Expressed at high levels in the testis.

The protein resides in the membrane. It localises to the cytoplasmic vesicle. The protein localises to the secretory vesicle membrane. It is found in the cell junction. Its subcellular location is the cytoplasm. The protein resides in the cytoskeleton. Adapter protein that binds to and probably organizes the subcellular localization of a variety of membrane proteins. May link various receptors to the actin cytoskeleton and the dystrophin glycoprotein complex. May play a role in the regulation of secretory granules via its interaction with PTPRN. In Mus musculus (Mouse), this protein is Beta-2-syntrophin (Sntb2).